The sequence spans 489 residues: N-succinylglutamate 5-semialdehyde dehydrogenase (489 aa).

223 to 228 (GSSRTG) lines the NAD(+) pocket. Active-site residues include glutamate 246 and cysteine 280.

The protein belongs to the aldehyde dehydrogenase family. AstD subfamily.

It carries out the reaction N-succinyl-L-glutamate 5-semialdehyde + NAD(+) + H2O = N-succinyl-L-glutamate + NADH + 2 H(+). It functions in the pathway amino-acid degradation; L-arginine degradation via AST pathway; L-glutamate and succinate from L-arginine: step 4/5. In terms of biological role, catalyzes the NAD-dependent reduction of succinylglutamate semialdehyde into succinylglutamate. The polypeptide is N-succinylglutamate 5-semialdehyde dehydrogenase (Aeromonas salmonicida (strain A449)).